A 68-amino-acid chain; its full sequence is MAILRSKEIWDMEVDEIQDKLVELRAELSKNVSKSAAAGVIENPGKIRELKRTIARVLTILNEKQKEN.

Belongs to the universal ribosomal protein uL29 family.

This Methanobrevibacter smithii (strain ATCC 35061 / DSM 861 / OCM 144 / PS) protein is Large ribosomal subunit protein uL29.